A 426-amino-acid chain; its full sequence is Enolase (426 aa).

Gln163 is a (2R)-2-phosphoglycerate binding site. Glu205 (proton donor) is an active-site residue. Mg(2+) contacts are provided by Asp242, Glu285, and Asp312. Lys337, Arg366, Ser367, and Lys388 together coordinate (2R)-2-phosphoglycerate. The active-site Proton acceptor is the Lys337.

This sequence belongs to the enolase family. Mg(2+) is required as a cofactor.

It is found in the cytoplasm. The protein resides in the secreted. Its subcellular location is the cell surface. It catalyses the reaction (2R)-2-phosphoglycerate = phosphoenolpyruvate + H2O. It participates in carbohydrate degradation; glycolysis; pyruvate from D-glyceraldehyde 3-phosphate: step 4/5. Functionally, catalyzes the reversible conversion of 2-phosphoglycerate (2-PG) into phosphoenolpyruvate (PEP). It is essential for the degradation of carbohydrates via glycolysis. The protein is Enolase of Nitrobacter winogradskyi (strain ATCC 25391 / DSM 10237 / CIP 104748 / NCIMB 11846 / Nb-255).